We begin with the raw amino-acid sequence, 326 residues long: Phenylalanine--tRNA ligase alpha subunit (326 aa).

Mg(2+) is bound at residue Glu251.

This sequence belongs to the class-II aminoacyl-tRNA synthetase family. Phe-tRNA synthetase alpha subunit type 1 subfamily. In terms of assembly, tetramer of two alpha and two beta subunits. It depends on Mg(2+) as a cofactor.

It localises to the cytoplasm. It catalyses the reaction tRNA(Phe) + L-phenylalanine + ATP = L-phenylalanyl-tRNA(Phe) + AMP + diphosphate + H(+). In Pseudoalteromonas atlantica (strain T6c / ATCC BAA-1087), this protein is Phenylalanine--tRNA ligase alpha subunit.